The sequence spans 345 residues: Putative pyridoxal reductase (345 aa).

The active-site Proton donor is Tyr60.

Belongs to the aldo/keto reductase family.

The protein resides in the cytoplasm. The protein localises to the nucleus. It carries out the reaction pyridoxine + NADP(+) = pyridoxal + NADPH + H(+). The protein operates within cofactor degradation; B6 vitamer degradation; pyridoxal from pyridoxine (dehydrogenase route): step 1/1. In terms of biological role, catalyzes the reduction of pyridoxal (PL) with NADPH and oxidation of pyridoxine (PN) with NADP(+). This Saccharomyces cerevisiae (strain ATCC 204508 / S288c) (Baker's yeast) protein is Putative pyridoxal reductase.